A 70-amino-acid polypeptide reads, in one-letter code: Putative microRNA 17 host gene protein (70 aa).

The Cytoplasmic segment spans residues 1–20 (MFCHVDVKISSKRYTWTKLP). A helical membrane pass occupies residues 21 to 43 (LNVPKLVLIYLQSHFVLFFFSMC). Residues 44–70 (QSIWERPAIGRATTSSASWMVGYDCLL) are Extracellular-facing.

Highly expressed in B-cell lymphoma and lung cancer.

Its subcellular location is the membrane. The polypeptide is Putative microRNA 17 host gene protein (MIR17HG) (Homo sapiens (Human)).